A 408-amino-acid polypeptide reads, in one-letter code: NADH-quinone oxidoreductase subunit D (408 aa).

Belongs to the complex I 49 kDa subunit family. In terms of assembly, NDH-1 is composed of 14 different subunits. Subunits NuoB, C, D, E, F, and G constitute the peripheral sector of the complex.

The protein localises to the cell inner membrane. It carries out the reaction a quinone + NADH + 5 H(+)(in) = a quinol + NAD(+) + 4 H(+)(out). In terms of biological role, NDH-1 shuttles electrons from NADH, via FMN and iron-sulfur (Fe-S) centers, to quinones in the respiratory chain. The immediate electron acceptor for the enzyme in this species is believed to be ubiquinone. Couples the redox reaction to proton translocation (for every two electrons transferred, four hydrogen ions are translocated across the cytoplasmic membrane), and thus conserves the redox energy in a proton gradient. This is NADH-quinone oxidoreductase subunit D from Campylobacter jejuni subsp. jejuni serotype O:6 (strain 81116 / NCTC 11828).